The following is a 332-amino-acid chain: Protein pelota homolog (332 aa).

It belongs to the eukaryotic release factor 1 family. Pelota subfamily. Monomer. A divalent metal cation serves as cofactor.

It is found in the cytoplasm. May function in recognizing stalled ribosomes, interact with stem-loop structures in stalled mRNA molecules, and effect endonucleolytic cleavage of the mRNA. May play a role in the release non-functional ribosomes and degradation of damaged mRNAs. Has endoribonuclease activity. In Pyrobaculum calidifontis (strain DSM 21063 / JCM 11548 / VA1), this protein is Protein pelota homolog.